The chain runs to 444 residues: Homogentisate 1,2-dioxygenase (444 aa).

His-298 serves as the catalytic Proton acceptor. 2 residues coordinate Fe cation: His-341 and Glu-347. Tyr-356 and His-377 together coordinate homogentisate. His-377 contributes to the Fe cation binding site.

It belongs to the homogentisate dioxygenase family. As to quaternary structure, hexamer; dimer of trimers. It depends on Fe cation as a cofactor.

It carries out the reaction homogentisate + O2 = 4-maleylacetoacetate + H(+). It participates in amino-acid degradation; L-phenylalanine degradation; acetoacetate and fumarate from L-phenylalanine: step 4/6. Its function is as follows. Involved in the catabolism of homogentisate (2,5-dihydroxyphenylacetate or 2,5-OH-PhAc), a central intermediate in the degradation of phenylalanine and tyrosine. Catalyzes the oxidative ring cleavage of the aromatic ring of homogentisate to yield maleylacetoacetate. The sequence is that of Homogentisate 1,2-dioxygenase from Burkholderia cenocepacia (strain ATCC BAA-245 / DSM 16553 / LMG 16656 / NCTC 13227 / J2315 / CF5610) (Burkholderia cepacia (strain J2315)).